The chain runs to 250 residues: Proteasome subunit alpha type-4 (250 aa).

It belongs to the peptidase T1A family. In terms of assembly, the 26S proteasome consists of a 20S proteasome core and two 19S regulatory subunits. The 20S proteasome core is composed of 28 subunits that are arranged in four stacked rings, resulting in a barrel-shaped structure. The two end rings are each formed by seven alpha subunits, and the two central rings are each formed by seven beta subunits. The catalytic chamber with the active sites is on the inside of the barrel.

The protein resides in the cytoplasm. It localises to the nucleus. In terms of biological role, the proteasome is a multicatalytic proteinase complex which is characterized by its ability to cleave peptides with Arg, Phe, Tyr, Leu, and Glu adjacent to the leaving group at neutral or slightly basic pH. The proteasome has an ATP-dependent proteolytic activity. The sequence is that of Proteasome subunit alpha type-4 (psmA4) from Dictyostelium discoideum (Social amoeba).